Consider the following 461-residue polypeptide: Fumarate hydratase class II (461 aa).

Substrate contacts are provided by residues 99-101, Arg127, 130-133, 140-142, and Thr188; these read SGT, HPND, and SSN. Residue His189 is the Proton donor/acceptor of the active site. Ser319 is an active-site residue. Substrate contacts are provided by residues Ser320 and 325 to 327; that span reads KVN.

The protein belongs to the class-II fumarase/aspartase family. Fumarase subfamily. In terms of assembly, homotetramer.

The protein localises to the cytoplasm. It carries out the reaction (S)-malate = fumarate + H2O. Its pathway is carbohydrate metabolism; tricarboxylic acid cycle; (S)-malate from fumarate: step 1/1. Involved in the TCA cycle. Catalyzes the stereospecific interconversion of fumarate to L-malate. This is Fumarate hydratase class II from Chromobacterium violaceum (strain ATCC 12472 / DSM 30191 / JCM 1249 / CCUG 213 / NBRC 12614 / NCIMB 9131 / NCTC 9757 / MK).